A 1525-amino-acid chain; its full sequence is Multidrug resistance-associated protein 1 (1525 aa).

Topologically, residues 1 to 33 (MGIESLCSADASEPFWDWNLTWHTENPDFTQCF) are extracellular. Residues 34–54 (QNTVLVWVPCIYLWVCFPAYF) traverse the membrane as a helical segment. The Cytoplasmic segment spans residues 55–74 (LYLRSHDRGYIQMSILNKAK). The helical transmembrane segment at 75–95 (TALGLILWIVCWADLFYSFWE) threads the bilayer. The Extracellular segment spans residues 96–100 (RSQNI). Residues 101-121 (FRAPFFLISPTVLGITMLLAT) traverse the membrane as a helical segment. The Cytoplasmic portion of the chain corresponds to 122-133 (FLIQHERLKGVQ). The chain crosses the membrane as a helical span at residues 134–154 (SSGVMMIFWLISLLCATVIFR). At 155–172 (SKIMLALNTDTEVDAFRY) the chain is on the extracellular side. A helical transmembrane segment spans residues 173–193 (VTFCTYFILLLVQLILSCFPE). Over 194 to 315 (KPPLFSEAVN…RSSEASLSKV (122 aa)) the chain is Cytoplasmic. A helical membrane pass occupies residues 316-336 (LYKTFGPYFLMSFLFKAAHDL). The region spanning 324–607 (FLMSFLFKAA…LPMVISSIVE (284 aa)) is the ABC transmembrane type-1 1 domain. The Extracellular portion of the chain corresponds to 337–362 (LMFTGPEILKLLINFVNNKSAPNWQG). A helical transmembrane segment spans residues 363 to 383 (YFYTGLLFVCACLQTLILHQY). Residues 384–439 (FHICFVTGMRLKTAIVGVIYRKALVITNSARKTSTVGEIVNLMSVDAQRFMDLATY) are Cytoplasmic-facing. The chain crosses the membrane as a helical span at residues 440–460 (INMIWSAPLQVILALYLLWRN). Residues 461–463 (LGP) lie on the Extracellular side of the membrane. A helical membrane pass occupies residues 464–484 (SVLAGVAVMILLVPINAVMAM). Topologically, residues 485 to 546 (KTKTYQVAQM…VLKKSAYLAA (62 aa)) are cytoplasmic. A helical membrane pass occupies residues 547 to 567 (MGTFTWVCAPFLVALSTFAVY). At 568-589 (VKVNKNNILDAQKAFVSLALFN) the chain is on the extracellular side. The helical transmembrane segment at 590-610 (ILRFPLNILPMVISSIVEASV) threads the bilayer. Residues 611–961 (SLKRLRVFLS…VKATVYWEYM (351 aa)) are Cytoplasmic-facing. Positions 641–865 (IVVKNATFSW…DGAFAEFLRT (225 aa)) constitute an ABC transporter 1 domain. 675-682 (GQVGCGKS) serves as a coordination point for ATP. 2 stretches are compositionally biased toward polar residues: residues 871 to 882 (QSMESSDASSPS) and 908 to 928 (SNSS…STAE). 2 disordered regions span residues 871–891 (QSME…PVEN) and 908–930 (SNSS…AELQ). Residues 962 to 982 (KAIGLYISFLSVFLFMCNHIA) traverse the membrane as a helical segment. The ABC transmembrane type-1 2 domain occupies 969 to 1250 (SFLSVFLFMC…LVRMTSDLET (282 aa)). At 983-1019 (SLASNYWLSLWTDDPVVNGTQQYTNVRLGVYGALGIS) the chain is on the extracellular side. The helical transmembrane segment at 1020–1040 (QGIAVFGYSMAVSIGGIFASR) threads the bilayer. Residues 1041–1083 (HLHLDLLHNVLRSPMSFFERTPSGNLVSRFSKEIDTIDSTIPP) lie on the Cytoplasmic side of the membrane. A helical membrane pass occupies residues 1084-1104 (IIKMFMGSTFNVIGACIIILL). Position 1105 (A1105) is a topological domain, extracellular. The chain crosses the membrane as a helical span at residues 1106–1126 (TPIAAVVIPPLGLVYLLVQRF). Residues 1127-1197 (YVATSRQLKR…VANRWLAVRL (71 aa)) are Cytoplasmic-facing. The chain crosses the membrane as a helical span at residues 1198 to 1218 (EFVGNCIVLFAALFAVIARNK). At 1219–1220 (LS) the chain is on the extracellular side. Residues 1221–1241 (PGLIGLSVSYSLQITAYLNWL) form a helical membrane-spanning segment. The Cytoplasmic portion of the chain corresponds to 1242-1525 (VRMTSDLETN…YSMAKDSGLA (284 aa)). One can recognise an ABC transporter 2 domain in the interval 1289-1521 (FRGFGLRYRE…KGLFYSMAKD (233 aa)). Residue 1321-1328 (GRTGAGKS) coordinates ATP.

Belongs to the ABC transporter superfamily. ABCC family. Conjugate transporter (TC 3.A.1.208) subfamily.

The protein localises to the cell membrane. It catalyses the reaction ATP + H2O + xenobioticSide 1 = ADP + phosphate + xenobioticSide 2.. It carries out the reaction an S-substituted glutathione(in) + ATP + H2O = an S-substituted glutathione(out) + ADP + phosphate + H(+). The enzyme catalyses sphing-4-enine 1-phosphate(in) + ATP + H2O = sphing-4-enine 1-phosphate(out) + ADP + phosphate + H(+). The catalysed reaction is leukotriene C4(in) + ATP + H2O = leukotriene C4(out) + ADP + phosphate + H(+). It catalyses the reaction 17beta-estradiol 17-O-(beta-D-glucuronate)(in) + ATP + H2O = 17beta-estradiol 17-O-(beta-D-glucuronate)(out) + ADP + phosphate + H(+). It carries out the reaction 2',3'-cGAMP(in) + ATP + H2O = 2',3'-cGAMP(out) + ADP + phosphate + H(+). In terms of biological role, mediates export of organic anions and drugs from the cytoplasm. Mediates ATP-dependent transport of glutathione and glutathione conjugates, leukotriene C4, estradiol-17-beta-o-glucuronide and other xenobiotics. Hydrolyzes ATP with low efficiency. Mediates ATP-dependent, GSH-independent cyclic GMP-AMP (cGAMP) export. Thus, by limiting intracellular cGAMP concentrations negatively regulates the cGAS-STING pathway. The sequence is that of Multidrug resistance-associated protein 1 from Gallus gallus (Chicken).